A 235-amino-acid chain; its full sequence is Small ribosomal subunit protein eS4 (235 aa).

Residues 37–100 (LPLGIIIRDI…NETYRMFQDE (64 aa)) form the S4 RNA-binding domain.

Belongs to the eukaryotic ribosomal protein eS4 family.

This is Small ribosomal subunit protein eS4 from Methanosarcina barkeri (strain Fusaro / DSM 804).